Here is a 363-residue protein sequence, read N- to C-terminus: Chalcone synthase B (363 aa).

Cys170 is an active-site residue.

The protein belongs to the thiolase-like superfamily. Chalcone/stilbene synthases family.

The catalysed reaction is (E)-4-coumaroyl-CoA + 3 malonyl-CoA + 3 H(+) = 2',4,4',6'-tetrahydroxychalcone + 3 CO2 + 4 CoA. The protein operates within secondary metabolite biosynthesis; flavonoid biosynthesis. Its function is as follows. The primary product of this enzyme is 4,2',4',6'-tetrahydroxychalcone (also termed naringenin-chalcone or chalcone) which can under specific conditions spontaneously isomerize into naringenin. This is Chalcone synthase B (CHSB) from Ipomoea nil (Japanese morning glory).